We begin with the raw amino-acid sequence, 143 residues long: MAMTTASTVFVLPANVTSVAGASSSRSSVSFLPMRNAGSRLVVRAAEDPAPASSSSKDSPAAAAAPDGATATKPKPPPIGPKRGSKVKILRRESYWFKNVGSVVAVDQDPKTRYPVVVRFAKVNYANISTNNYALDEVEEVAA.

A chloroplast-targeting transit peptide spans Met-1–Arg-44. The tract at residues Val-43 to Ser-85 is disordered. Over residues Asp-48–Lys-73 the composition is skewed to low complexity.

The protein belongs to the PsaE family. 2 isoforms may exist. With or without the N-terminal alanine.

Its subcellular location is the plastid. The protein resides in the chloroplast thylakoid membrane. Stabilizes the interaction between PsaC and the PSI core, assists the docking of the ferredoxin to PSI and interacts with ferredoxin-NADP oxidoreductase. This Arabidopsis thaliana (Mouse-ear cress) protein is Photosystem I reaction center subunit IV A, chloroplastic (PSAE1).